A 384-amino-acid polypeptide reads, in one-letter code: Alpha-2B adrenergic receptor (384 aa).

Residues alanine 1–leucine 25 form a helical membrane-spanning segment. Topologically, residues threonine 26–leucine 36 are cytoplasmic. Residues phenylalanine 37–leucine 62 traverse the membrane as a helical segment. The Extracellular segment spans residues glycine 63–cysteine 72. Cysteine 72 and cysteine 151 are joined by a disulfide. A helical transmembrane segment spans residues glutamate 73–leucine 95. The Cytoplasmic segment spans residues aspartate 96–lysine 117. A helical transmembrane segment spans residues cysteine 118–aspartate 140. Over glutamine 141–glutamate 156 the chain is Extracellular. A helical transmembrane segment spans residues alanine 157–leucine 180. At arginine 181–valine 348 the chain is on the cytoplasmic side. Residues arginine 192–proline 289 form a disordered region. The span at leucine 218 to alanine 229 shows a compositional bias: polar residues. Residues proline 240–proline 249 are compositionally biased toward basic and acidic residues. The chain crosses the membrane as a helical span at residues leucine 349–isoleucine 372. The Extracellular portion of the chain corresponds to cysteine 373 to histidine 381. Residues glycine 382–phenylalanine 384 traverse the membrane as a helical segment.

This sequence belongs to the G-protein coupled receptor 1 family. Adrenergic receptor subfamily. ADRA2B sub-subfamily. As to quaternary structure, interacts with RAB26. Interacts with PPP1R9B. Interacts with GGA1, GGA2 and GGA3.

The protein resides in the cell membrane. Alpha-2 adrenergic receptors mediate the catecholamine-induced inhibition of adenylate cyclase through the action of G proteins. The chain is Alpha-2B adrenergic receptor (ADRA2B) from Elephas maximus (Indian elephant).